The sequence spans 398 residues: Phosphoglycerate kinase (398 aa).

Residues 20–22 (DLN), Arg-35, 58–61 (HLGR), Arg-118, and Arg-155 each bind substrate. ATP contacts are provided by residues Lys-206, Gly-295, Glu-326, and 354–357 (GGDS).

It belongs to the phosphoglycerate kinase family. As to quaternary structure, monomer.

The protein resides in the cytoplasm. The enzyme catalyses (2R)-3-phosphoglycerate + ATP = (2R)-3-phospho-glyceroyl phosphate + ADP. It functions in the pathway carbohydrate degradation; glycolysis; pyruvate from D-glyceraldehyde 3-phosphate: step 2/5. This chain is Phosphoglycerate kinase, found in Onion yellows phytoplasma (strain OY-M).